Here is a 330-residue protein sequence, read N- to C-terminus: Ketol-acid reductoisomerase (NADP(+)) (330 aa).

Positions methionine 1–threonine 182 constitute a KARI N-terminal Rossmann domain. Residues tyrosine 25–glutamine 28, arginine 48, serine 51, serine 53, and aspartate 83–glutamine 86 contribute to the NADP(+) site. Histidine 108 is an active-site residue. Glycine 134 is a binding site for NADP(+). The 146-residue stretch at threonine 183–leucine 328 folds into the KARI C-terminal knotted domain. Residues aspartate 191, glutamate 195, glutamate 227, and glutamate 231 each contribute to the Mg(2+) site. Serine 252 is a binding site for substrate.

It belongs to the ketol-acid reductoisomerase family. The cofactor is Mg(2+).

The enzyme catalyses (2R)-2,3-dihydroxy-3-methylbutanoate + NADP(+) = (2S)-2-acetolactate + NADPH + H(+). It catalyses the reaction (2R,3R)-2,3-dihydroxy-3-methylpentanoate + NADP(+) = (S)-2-ethyl-2-hydroxy-3-oxobutanoate + NADPH + H(+). Its pathway is amino-acid biosynthesis; L-isoleucine biosynthesis; L-isoleucine from 2-oxobutanoate: step 2/4. It functions in the pathway amino-acid biosynthesis; L-valine biosynthesis; L-valine from pyruvate: step 2/4. Its function is as follows. Involved in the biosynthesis of branched-chain amino acids (BCAA). Catalyzes an alkyl-migration followed by a ketol-acid reduction of (S)-2-acetolactate (S2AL) to yield (R)-2,3-dihydroxy-isovalerate. In the isomerase reaction, S2AL is rearranged via a Mg-dependent methyl migration to produce 3-hydroxy-3-methyl-2-ketobutyrate (HMKB). In the reductase reaction, this 2-ketoacid undergoes a metal-dependent reduction by NADPH to yield (R)-2,3-dihydroxy-isovalerate. In Moorella thermoacetica (strain ATCC 39073 / JCM 9320), this protein is Ketol-acid reductoisomerase (NADP(+)).